The chain runs to 779 residues: Phosphoribosylformylglycinamidine synthase subunit PurL (779 aa).

His52 is a catalytic residue. ATP contacts are provided by Tyr55 and Lys94. Mg(2+) is bound at residue Glu96. Substrate is bound by residues 97–100 and Arg119; that span reads SHNH. His98 (proton acceptor) is an active-site residue. Residue Asp120 participates in Mg(2+) binding. Residue Gln243 coordinates substrate. Asp271 contacts Mg(2+). 315 to 317 is a substrate binding site; the sequence is ESQ. Positions 523 and 560 each coordinate ATP. Asn561 is a Mg(2+) binding site. Ser563 is a binding site for substrate.

This sequence belongs to the FGAMS family. In terms of assembly, monomer. Part of the FGAM synthase complex composed of 1 PurL, 1 PurQ and 2 PurS subunits.

The protein localises to the cytoplasm. The catalysed reaction is N(2)-formyl-N(1)-(5-phospho-beta-D-ribosyl)glycinamide + L-glutamine + ATP + H2O = 2-formamido-N(1)-(5-O-phospho-beta-D-ribosyl)acetamidine + L-glutamate + ADP + phosphate + H(+). Its pathway is purine metabolism; IMP biosynthesis via de novo pathway; 5-amino-1-(5-phospho-D-ribosyl)imidazole from N(2)-formyl-N(1)-(5-phospho-D-ribosyl)glycinamide: step 1/2. In terms of biological role, part of the phosphoribosylformylglycinamidine synthase complex involved in the purines biosynthetic pathway. Catalyzes the ATP-dependent conversion of formylglycinamide ribonucleotide (FGAR) and glutamine to yield formylglycinamidine ribonucleotide (FGAM) and glutamate. The FGAM synthase complex is composed of three subunits. PurQ produces an ammonia molecule by converting glutamine to glutamate. PurL transfers the ammonia molecule to FGAR to form FGAM in an ATP-dependent manner. PurS interacts with PurQ and PurL and is thought to assist in the transfer of the ammonia molecule from PurQ to PurL. The sequence is that of Phosphoribosylformylglycinamidine synthase subunit PurL from Prochlorococcus marinus subsp. pastoris (strain CCMP1986 / NIES-2087 / MED4).